Consider the following 181-residue polypeptide: Mitochondrial pyruvate carrier-like protein (181 aa).

2 helical membrane passes run 23-42 (YLAS…PLAA) and 52-74 (IISG…FAYR). The tract at residues 125–154 (TGSVDSSATSTGSVDSSATSTGSVDSSAAT) is disordered.

Belongs to the mitochondrial pyruvate carrier (MPC) (TC 2.A.105) family.

The protein localises to the mitochondrion inner membrane. Its function is as follows. May mediate the uptake of pyruvate into mitochondria. The protein is Mitochondrial pyruvate carrier-like protein of Bos taurus (Bovine).